The chain runs to 327 residues: Asnovolin J 5',6'-dehydrogenase nvfM (327 aa).

A helical transmembrane segment spans residues 9 to 29 (VAIVGASGVTGGSIVNGLLAL). NADP(+) contacts are provided by residues 13–19 (GASGVTG) and Lys47. Lys130 acts as the Proton acceptor in catalysis.

Belongs to the NmrA-type oxidoreductase family.

It is found in the membrane. The catalysed reaction is asnovolin K + AH2 = asnovolin A + A. It catalyses the reaction chermesin D methyl ester + AH2 = asnovolin J + A. The protein operates within secondary metabolite biosynthesis; terpenoid biosynthesis. Asnovolin J 5',6'-dehydrogenase; part of the gene cluster that mediates the biosynthesis of novofumigatonin, a heavily oxygenated meroterpenoid containing a unique orthoester moiety. The first step of the pathway is the synthesis of 3,5-dimethylorsellinic acid (DMOA) by the polyketide synthase nvfA via condensation of one acetyl-CoA starter unit with 3 malonyl-CoA units and 2 methylations. DMOA is then converted to farnesyl-DMOA by the farnesyltransferase nvfB. Epoxydation by FAD-dependent monooxygenase nvfK, followed by a protonation-initiated cyclization catalyzed by the terpene cyclase nvfL leads to the production of asnavolin H. The short chain dehydrogenase nvfC then as a 3-OH dehydrogenase of asnovolin H to yield chemesin D. There are two branches to synthesize asnovolin A from chemesin D. In one branch, chemesin D undergoes Baeyer-Villiger oxidation by nvfH, methylation by nvfJ, and enoyl reduction by the nvfM D enoylreductase that reduces the double bond between C-5'and C-6', to form respectively asnovolin I, asnovolin K, and asnovolin A. In the other branch, the methylation precedes the Baeyer-Villiger oxidation and the enoyl reduction to yield asnovolin A via the asnovolin J intermediate. Asnovolin A is further converted to fumigatonoid A by the Fe(II)/2-oxoglutarate-dependent dioxygenase nvfI that catalyzes an endoperoxidation reaction. The alpha/beta hydrolase nvfD then acts as an epimerase that converts fumigatonoid A to its C-5' epimer, which then undergoes spontaneous or nvfD-catalyzed lactonization. The following step utilizes the ketoreductase nvfG to produce fumigatonoid B. The dioxygenase nvfE further converts fumigatonoid B into fumigatonoid C. Finally the Fe(II)/2-oxoglutarate-dependent dioxygenase nvfF catalyzes two rounds of oxidation to transform fumigatonoid C into the end product, novofumigatonin A. The polypeptide is Asnovolin J 5',6'-dehydrogenase nvfM (Aspergillus novofumigatus (strain IBT 16806)).